The sequence spans 911 residues: MSHKKRVYPTAQLQYGQTNIYEQHGVPQDAGAPQGQPLQSDIPYMNAQPGVIPGQGAPMMMDNGAMPQQQMFTPAQQQLNQQIDQTTAAMGNMQFNPAANESNMYYQQPLPQQQQQQQQQQGPAKPPKPMNQLYPIDLLVAFPPPISDLSLPPPPILFPLDTIPVPSEDALAPSNYIRSTLNAVPKSNSLLKKTKLPFSLVITPYQHLHDDINPPPLNEDGTIVRCRRCRSYMNPFVHFNQDGRRWKCNICNLFNEVPSFLDRMPNDTMSNRYMRNELRYSVVEYLAPKEYSLRQPPPSTYTFIIDVSQNAMKNGLLGTTTRTLLDNLDSLPNHDGRTRISILCVDNGLHYFAIPSDDQEGQQVEMMDVCDLDDAFIPRPDSMVVNLVQCRNNIETLLTKIPQIFQNNIINKFALGPALQAAYNLTRNEGGKIIVVSATLPNIGVGQLKKRVEEANVGTPKESQQLLTCQDPFYKTFTIQCNKVQISIDMFLASEEYMDVATLANLGHFSGGQTHFYPGFSAQRITDATKFSMEFAKHLSMDTSNEVVMRARGSTGIRTTGFHGHFFNRSSDLCAFSIMNRDQSYVFDITLDENIAAEYCYVQVAILLSLNTSQRRIRVITLALPTTDSIAEVYASVDQLAVTAAFTQKAIDKAQDTSLEEARRFINQSVEDVLTTYKKELVVQNTGAGGMPLRLCANMKIFPLLMHALTKNLAFRPGRVPSDHRAAALNYMESVPLKYLLKCIYPTIYSLHDMPDEVGLPDENNEIILPEPINASYSSFETYGLYLIDNGIDLFLWMGGEALPQLVEDAFGVPNILEMPIGKQEVPVVPESPFNERIRNIINRLRNHDDVITYQSLYILRSASNSDPVQANAKELSSLRMWASTHLVEDKIMGSEGYRDFLQMMKNKTSK.

Residues 108-123 (QPLPQQQQQQQQQQGP) are compositionally biased toward low complexity. Positions 108–130 (QPLPQQQQQQQQQQGPAKPPKPM) are disordered. Cys-226, Cys-229, Cys-248, and Cys-251 together coordinate Zn(2+). The interval 226–251 (CRRCRSYMNPFVHFNQDGRRWKCNIC) is zinc finger-like.

The protein belongs to the SEC23/SEC24 family. SEC24 subfamily. The COPII coat is composed of at least 5 proteins: the SEC23/24 complex, the SEC13/31 complex, and the protein SAR1. Golgi apparatus membrane; Peripheral membrane protein; Cytoplasmic side.

The protein localises to the cytoplasm. It is found in the cytoplasmic vesicle. It localises to the COPII-coated vesicle membrane. Its subcellular location is the endoplasmic reticulum membrane. The protein resides in the golgi apparatus membrane. Functionally, component of the coat protein complex II (COPII) which promotes the formation of transport vesicles from the endoplasmic reticulum (ER). The coat has two main functions, the physical deformation of the endoplasmic reticulum membrane into vesicles and the selection of cargo molecules. The protein is Protein transport protein SEC24-1 (SEC241) of Naumovozyma castellii (Yeast).